We begin with the raw amino-acid sequence, 82 residues long: Small ribosomal subunit protein bS16 (82 aa).

This sequence belongs to the bacterial ribosomal protein bS16 family.

This is Small ribosomal subunit protein bS16 from Enterobacter sp. (strain 638).